Consider the following 331-residue polypeptide: N-acetyl-alpha-D-glucosaminyl-diphospho-ditrans,octacis-undecaprenol 4-epimerase (331 aa).

NAD(+)-binding positions include 13 to 14 (FV), 34 to 39 (QQSHFY), 47 to 48 (DV), Ser-109, Tyr-132, and Lys-136. Positions 109 and 132 each coordinate substrate. The active-site Proton acceptor is Tyr-132. Residues 183–184 (GK) and 199–201 (YVG) each bind substrate.

The protein belongs to the NAD(P)-dependent epimerase/dehydratase family. NAD(+) serves as cofactor.

The protein resides in the cell membrane. It carries out the reaction N-acetyl-alpha-D-glucosaminyl-di-trans,octa-cis-undecaprenyl diphosphate = N-acetyl-alpha-D-galactosaminyl-di-trans,octa-cis-undecaprenyl diphosphate. It functions in the pathway bacterial outer membrane biogenesis; LPS O-antigen biosynthesis. Involved in biosynthesis of the repeating tetrasaccharide unit of the O-antigen. Catalyzes the reversible epimerization of the hydroxyl group at position C4 of undecaprenyl pyrophosphate-N-acetylglucosamine (UndPP-GlcNAc) to yield undecaprenyl pyrophosphate-N-acetylgalactosamine (UndPP-GalNAc). This Escherichia coli O157:H7 protein is N-acetyl-alpha-D-glucosaminyl-diphospho-ditrans,octacis-undecaprenol 4-epimerase.